A 127-amino-acid chain; its full sequence is Aspartate 1-decarboxylase (127 aa).

S25 (schiff-base intermediate with substrate; via pyruvic acid) is an active-site residue. The residue at position 25 (S25) is a Pyruvic acid (Ser). T57 contributes to the substrate binding site. Y58 serves as the catalytic Proton donor. Residue 73–75 (GAA) coordinates substrate.

It belongs to the PanD family. Heterooctamer of four alpha and four beta subunits. It depends on pyruvate as a cofactor. In terms of processing, is synthesized initially as an inactive proenzyme, which is activated by self-cleavage at a specific serine bond to produce a beta-subunit with a hydroxyl group at its C-terminus and an alpha-subunit with a pyruvoyl group at its N-terminus.

The protein resides in the cytoplasm. It carries out the reaction L-aspartate + H(+) = beta-alanine + CO2. It participates in cofactor biosynthesis; (R)-pantothenate biosynthesis; beta-alanine from L-aspartate: step 1/1. Catalyzes the pyruvoyl-dependent decarboxylation of aspartate to produce beta-alanine. The sequence is that of Aspartate 1-decarboxylase from Bacillus pumilus (strain SAFR-032).